The chain runs to 31 residues: Photosystem II reaction center protein T (31 aa).

The helical transmembrane segment at 3-23 (SFAYILILAFSIGTLFFAIAL) threads the bilayer.

The protein belongs to the PsbT family. In terms of assembly, PSII is composed of 1 copy each of membrane proteins PsbA, PsbB, PsbC, PsbD, PsbE, PsbF, PsbH, PsbI, PsbJ, PsbK, PsbL, PsbM, PsbT, PsbX, PsbY, PsbZ, Psb30/Ycf12, peripheral proteins PsbO, CyanoQ (PsbQ), PsbU, PsbV and a large number of cofactors. It forms dimeric complexes.

It localises to the cellular thylakoid membrane. Its function is as follows. Found at the monomer-monomer interface of the photosystem II (PS II) dimer, plays a role in assembly and dimerization of PSII. PSII is a light-driven water plastoquinone oxidoreductase, using light energy to abstract electrons from H(2)O, generating a proton gradient subsequently used for ATP formation. In Synechococcus sp. (strain RCC307), this protein is Photosystem II reaction center protein T.